The primary structure comprises 300 residues: C-4 methylsterol oxidase erg25 (300 aa).

Residues threonine 140–threonine 276 form the Fatty acid hydroxylase domain. Positions histidine 154–histidine 158 match the Histidine box-1 motif. Positions histidine 167 to histidine 171 match the Histidine box-2 motif. The chain crosses the membrane as a helical span at residues proline 186–phenylalanine 206. Residues histidine 251–methionine 257 carry the Histidine box-3 motif.

The protein belongs to the sterol desaturase family. In terms of assembly, heterotetramer of erg25, erg26, erg27 and erg28. Erg28 acts as a scaffold to tether erg27 and other 4,4-demethylation-related enzymes, forming a demethylation enzyme complex, in the endoplasmic reticulum. Fe cation serves as cofactor.

The protein resides in the endoplasmic reticulum membrane. It catalyses the reaction 4,4-dimethyl-5alpha-cholesta-8,24-dien-3beta-ol + 6 Fe(II)-[cytochrome b5] + 3 O2 + 5 H(+) = 4beta-methylzymosterol-4alpha-carboxylate + 6 Fe(III)-[cytochrome b5] + 4 H2O. The enzyme catalyses 4alpha-methylzymosterol + 6 Fe(II)-[cytochrome b5] + 3 O2 + 5 H(+) = 4alpha-carboxyzymosterol + 6 Fe(III)-[cytochrome b5] + 4 H2O. The protein operates within steroid biosynthesis; zymosterol biosynthesis; zymosterol from lanosterol: step 3/6. Its pathway is steroid metabolism; ergosterol biosynthesis. Its function is as follows. C-4 methylsterol oxidase; part of the third module of ergosterol biosynthesis pathway that includes by the late steps of the pathway. Erg25 is a catalytic component of the C-4 demethylation complex that catalyzes the three-step monooxygenation required for the demethylation of 4,4-dimethyl and 4alpha-methylsterols. The third module or late pathway involves the ergosterol synthesis itself through consecutive reactions that mainly occur in the endoplasmic reticulum (ER) membrane. Firstly, the squalene synthase erg9 catalyzes the condensation of 2 farnesyl pyrophosphate moieties to form squalene, which is the precursor of all steroids. Secondly, squalene is converted into lanosterol by the consecutive action of the squalene epoxidase erg1 and the lanosterol synthase erg7. The lanosterol 14-alpha-demethylase erg11/cyp1 catalyzes C14-demethylation of lanosterol to produce 4,4'-dimethyl cholesta-8,14,24-triene-3-beta-ol. In the next steps, a complex process involving various demethylation, reduction and desaturation reactions catalyzed by the C-14 reductase erg24 and the C-4 demethylation complex erg25-erg26-erg27 leads to the production of zymosterol. Erg28 likely functions in the C-4 demethylation complex reaction by tethering erg26 and Erg27 to the endoplasmic reticulum or to facilitate interaction between these proteins. Then, the sterol 24-C-methyltransferase erg6 catalyzes the methyl transfer from S-adenosyl-methionine to the C-24 of zymosterol to form fecosterol. The C-8 sterol isomerase erg2 catalyzes the reaction which results in unsaturation at C-7 in the B ring of sterols and thus converts fecosterol to episterol. The sterol-C5-desaturases erg31 and erg32 then catalyze the introduction of a C-5 double bond in the B ring to produce 5-dehydroepisterol. The C-22 sterol desaturase erg5 further converts 5-dehydroepisterol into ergosta-5,7,22,24(28)-tetraen-3beta-ol by forming the C-22(23) double bond in the sterol side chain. Finally, ergosta-5,7,22,24(28)-tetraen-3beta-ol is substrate of the C-24(28) sterol reductase erg4 to produce ergosterol. In the genus Schizosaccharomyces, a second route exists between lanosterol and fecosterol, via the methylation of lanosterol to eburicol by erg6, followed by C14-demethylation by erg11/cyp1 and C4-demethylation by the demethylation complex erg25-erg26-erg27. The chain is C-4 methylsterol oxidase erg25 from Schizosaccharomyces pombe (strain 972 / ATCC 24843) (Fission yeast).